Here is a 429-residue protein sequence, read N- to C-terminus: MVKLHIGIDDTDSPKGMCTTYLGALLYREISKIAEPLDLPKLIRLNPNVPYKTRGNGAVAMSFDAREEDILKIKNLVLEMVKKLSEFSHQNTNPGVVFIEGDIPEKLERFAYKAIWEHLNITDAENIAEELNAEIHKFRLGRGIIGALAAIGHPLKVFTYELLAYRTREFWGTARKVNKESVFAVDHLTYPFTYDNVDLSKGSVLITPHGKDPVLVGIRGIDKNKVIWAFENITFEEPIDFFQIYKTNQNTDDHLRFKKIAELKPLDSAIVRGKVIKKYWEKGRHVFFEISDDTGKLRVAAFEPTKGFRKYVRMLIEGDEIIAAGGVKEFNGVLTLNLEKFYPIKLTEKITYEKPKCPKCKGTMKSKGEYLKCKKCGYKMKKVLIPKRIPRDLKRKIYEVPPDARKHLSRPLVLPMAENKILDVLKLKR.

Positions 271–343 form a DNA-binding region, OB; that stretch reads VRGKVIKKYW…LTLNLEKFYP (73 aa).

The protein belongs to the TiaS family.

Its subcellular location is the cytoplasm. The enzyme catalyses cytidine(34) in tRNA(Ile2) + agmatine + ATP + H2O = 2-agmatinylcytidine(34) in tRNA(Ile2) + AMP + 2 phosphate + 2 H(+). Its function is as follows. ATP-dependent agmatine transferase that catalyzes the formation of 2-agmatinylcytidine (agm2C) at the wobble position (C34) of tRNA(Ile2), converting the codon specificity from AUG to AUA. This is tRNA(Ile2) 2-agmatinylcytidine synthetase TiaS from Thermococcus sibiricus (strain DSM 12597 / MM 739).